The sequence spans 261 residues: Na(+)-translocating NADH-quinone reductase subunit C (261 aa).

The helical transmembrane segment at 12–32 (LGVVIGLSLVCSIIVSTAAVG) threads the bilayer. An FMN phosphoryl threonine modification is found at Thr229.

This sequence belongs to the NqrC family. As to quaternary structure, composed of six subunits; NqrA, NqrB, NqrC, NqrD, NqrE and NqrF. FMN is required as a cofactor.

It is found in the cell inner membrane. The catalysed reaction is a ubiquinone + n Na(+)(in) + NADH + H(+) = a ubiquinol + n Na(+)(out) + NAD(+). In terms of biological role, NQR complex catalyzes the reduction of ubiquinone-1 to ubiquinol by two successive reactions, coupled with the transport of Na(+) ions from the cytoplasm to the periplasm. NqrA to NqrE are probably involved in the second step, the conversion of ubisemiquinone to ubiquinol. The polypeptide is Na(+)-translocating NADH-quinone reductase subunit C (Vibrio parahaemolyticus serotype O3:K6 (strain RIMD 2210633)).